The chain runs to 575 residues: Aspartate--tRNA ligase (575 aa).

Glu169 lines the L-aspartate pocket. Residues 193 to 196 (QLFK) are aspartate. Arg215 serves as a coordination point for L-aspartate. ATP is bound by residues 215–217 (RDE) and Gln224. His438 contacts L-aspartate. Glu472 serves as a coordination point for ATP. Arg479 is an L-aspartate binding site. Residue 524-527 (GLDR) participates in ATP binding.

Belongs to the class-II aminoacyl-tRNA synthetase family. Type 1 subfamily. Homodimer.

It is found in the cytoplasm. It carries out the reaction tRNA(Asp) + L-aspartate + ATP = L-aspartyl-tRNA(Asp) + AMP + diphosphate. Its function is as follows. Catalyzes the attachment of L-aspartate to tRNA(Asp) in a two-step reaction: L-aspartate is first activated by ATP to form Asp-AMP and then transferred to the acceptor end of tRNA(Asp). This is Aspartate--tRNA ligase from Mycoplasma capricolum subsp. capricolum (strain California kid / ATCC 27343 / NCTC 10154).